The chain runs to 324 residues: Probable non-intrinsic ABC protein 5 (324 aa).

An ABC transporter domain is found at 2–111 (DRERYDKVIE…ADLTLVMKDG (110 aa)). 2 consecutive transmembrane segments (helical) span residues 212-232 (YITL…QILF) and 259-279 (LSTL…CILV). One can recognise an ABC transmembrane type-1 domain in the interval 222–324 (VPFILLGQIL…TCSKTCIYSS (103 aa)).

Belongs to the ABC transporter superfamily.

Its subcellular location is the membrane. The sequence is that of Probable non-intrinsic ABC protein 5 (NAP5) from Arabidopsis thaliana (Mouse-ear cress).